Here is a 721-residue protein sequence, read N- to C-terminus: Catalase-peroxidase 1 (721 aa).

A cross-link (tryptophyl-tyrosyl-methioninium (Trp-Tyr) (with M-249)) is located at residues 98 to 223; the sequence is WHAAGSYRVA…LAAVQMGLIY (126 aa). His99 serves as the catalytic Proton acceptor. The tryptophyl-tyrosyl-methioninium (Tyr-Met) (with W-98) cross-link spans 223–249; sequence YVNPEGVNGQPDPLRTAQDVRVTFGRM. His264 lines the heme b pocket.

Belongs to the peroxidase family. Peroxidase/catalase subfamily. Homodimer or homotetramer. It depends on heme b as a cofactor. Formation of the three residue Trp-Tyr-Met cross-link is important for the catalase, but not the peroxidase activity of the enzyme.

It catalyses the reaction H2O2 + AH2 = A + 2 H2O. The catalysed reaction is 2 H2O2 = O2 + 2 H2O. Its function is as follows. Bifunctional enzyme with both catalase and broad-spectrum peroxidase activity. This Legionella pneumophila (strain Paris) protein is Catalase-peroxidase 1.